Reading from the N-terminus, the 209-residue chain is Kynurenine formamidase (209 aa).

Tryptophan 18 is a binding site for substrate. The Zn(2+) site is built by histidine 48, histidine 52, and aspartate 54. Histidine 58 (proton donor/acceptor) is an active-site residue. Positions 160 and 172 each coordinate Zn(2+).

This sequence belongs to the Cyclase 1 superfamily. KynB family. Homodimer. The cofactor is Zn(2+).

The enzyme catalyses N-formyl-L-kynurenine + H2O = L-kynurenine + formate + H(+). It functions in the pathway amino-acid degradation; L-tryptophan degradation via kynurenine pathway; L-kynurenine from L-tryptophan: step 2/2. Its function is as follows. Catalyzes the hydrolysis of N-formyl-L-kynurenine to L-kynurenine, the second step in the kynurenine pathway of tryptophan degradation. This is Kynurenine formamidase from Paraburkholderia phymatum (strain DSM 17167 / CIP 108236 / LMG 21445 / STM815) (Burkholderia phymatum).